The primary structure comprises 278 residues: HTH-type transcriptional activator RhaS (278 aa).

One can recognise an HTH araC/xylS-type domain in the interval 174–272 (NQLMAWLEDH…NWSPRDIRQG (99 aa)). 2 consecutive DNA-binding regions (H-T-H motif) follow at residues 191–212 (EAVAEQFSLSLRTLHRQLKQHT) and 239–262 (VTEIAYRCGFGDSNHFSTLFRREF).

In terms of assembly, binds DNA as a dimer.

Its subcellular location is the cytoplasm. In terms of biological role, activates expression of the rhaBAD and rhaT operons. The sequence is that of HTH-type transcriptional activator RhaS from Salmonella dublin (strain CT_02021853).